We begin with the raw amino-acid sequence, 220 residues long: Artemin (220 aa).

The N-terminal stretch at 1–39 (MELGLGGLSTLSHCPWPRQQPALWPTLAALALLSSVAEA) is a signal peptide. Positions 40–107 (SLGSAPRSPA…ALPRGGRAAR (68 aa)) are excised as a propeptide. Positions 41 to 121 (LGSAPRSPAP…GSRARAAGAR (81 aa)) are disordered. 2 stretches are compositionally biased toward pro residues: residues 47–58 (SPAPREGPPPVL) and 81–98 (PPPQ…PPSA). Low complexity predominate over residues 99 to 121 (LPRGGRAARAGGPGSRARAAGAR). Intrachain disulfides connect C123/C188, C150/C216, and C154/C218. N-linked (GlcNAc...) asparagine glycosylation is present at N202.

This sequence belongs to the TGF-beta family. GDNF subfamily. As to quaternary structure, homodimer; disulfide-linked. Interacts with GFRA3 coreceptor and RET: forms a 2:2:2 ternary complex composed of ARTN ligand, GFRA3 and RET receptor. In terms of tissue distribution, ubiquitous. Expressed at high levels in peripheral tissues including prostate, placenta, pancreas, heart, kidney, pituitary gland, lung and testis. Expressed at low levels in the brain.

Its subcellular location is the secreted. Functionally, growth factor that supports the survival of sensory and sympathetic peripheral neurons in culture and also supports the survival of dopaminergic neurons of the ventral mid-brain. Acts by binding to its coreceptor, GFRA3, leading to autophosphorylation and activation of the RET receptor. Strong attractant of gut hematopoietic cells thus promoting the formation Peyer's patch-like structures, a major component of the gut-associated lymphoid tissue. The sequence is that of Artemin from Homo sapiens (Human).